The primary structure comprises 238 residues: Probable 2-phosphosulfolactate phosphatase (238 aa).

This sequence belongs to the ComB family. The cofactor is Mg(2+).

The catalysed reaction is (2R)-O-phospho-3-sulfolactate + H2O = (2R)-3-sulfolactate + phosphate. This is Probable 2-phosphosulfolactate phosphatase from Clostridium beijerinckii (strain ATCC 51743 / NCIMB 8052) (Clostridium acetobutylicum).